The sequence spans 291 residues: Nitrogenase iron protein 1 (291 aa).

10–17 (GKGGIGKS) provides a ligand contact to ATP. A [4Fe-4S] cluster-binding site is contributed by cysteine 98. Arginine 101 is subject to ADP-ribosylarginine; by dinitrogenase reductase ADP-ribosyltransferase. Cysteine 133 serves as a coordination point for [4Fe-4S] cluster.

The protein belongs to the NifH/BchL/ChlL family. In terms of assembly, homodimer. [4Fe-4S] cluster is required as a cofactor. In terms of processing, the reversible ADP-ribosylation of Arg-101 inactivates the nitrogenase reductase and regulates nitrogenase activity.

The enzyme catalyses N2 + 8 reduced [2Fe-2S]-[ferredoxin] + 16 ATP + 16 H2O = H2 + 8 oxidized [2Fe-2S]-[ferredoxin] + 2 NH4(+) + 16 ADP + 16 phosphate + 6 H(+). Functionally, the key enzymatic reactions in nitrogen fixation are catalyzed by the nitrogenase complex, which has 2 components: the iron protein (component 2) and a component 1 which is either a molybdenum-iron protein, a vanadium-iron, or an iron-iron protein. The sequence is that of Nitrogenase iron protein 1 (nifH1) from Azotobacter chroococcum mcd 1.